Reading from the N-terminus, the 320-residue chain is Malate dehydrogenase (320 aa).

Residues 10 to 15 (GSGMIG) and Asp34 each bind NAD(+). Substrate-binding residues include Arg83 and Arg89. Residues Asn96 and 119–121 (ITN) contribute to the NAD(+) site. Substrate-binding residues include Asn121 and Arg152. His176 (proton acceptor) is an active-site residue.

It belongs to the LDH/MDH superfamily. MDH type 3 family.

It catalyses the reaction (S)-malate + NAD(+) = oxaloacetate + NADH + H(+). Catalyzes the reversible oxidation of malate to oxaloacetate. This is Malate dehydrogenase from Bartonella henselae (strain ATCC 49882 / DSM 28221 / CCUG 30454 / Houston 1) (Rochalimaea henselae).